The following is a 296-amino-acid chain: Pyridoxine/pyridoxal/pyridoxamine kinase (296 aa).

Residues Ser-23 and His-59 each coordinate substrate. Asp-125 is an ATP binding site. Residue Tyr-136 participates in Mg(2+) binding. ATP-binding positions include Thr-157, Glu-162, Thr-195, 222-225 (HQRV), and Thr-232. Glu-162 provides a ligand contact to Mg(2+). Position 234 (Asp-234) interacts with substrate.

This sequence belongs to the pyridoxine kinase family. PdxK subfamily. Homodimer. Mg(2+) is required as a cofactor.

The catalysed reaction is pyridoxal + ATP = pyridoxal 5'-phosphate + ADP + H(+). The enzyme catalyses pyridoxine + ATP = pyridoxine 5'-phosphate + ADP + H(+). It catalyses the reaction pyridoxamine + ATP = pyridoxamine 5'-phosphate + ADP + H(+). Its pathway is cofactor metabolism; pyridoxal 5'-phosphate salvage; pyridoxal 5'-phosphate from pyridoxal: step 1/1. It participates in cofactor metabolism; pyridoxal 5'-phosphate salvage; pyridoxine 5'-phosphate from pyridoxine: step 1/1. It functions in the pathway cofactor metabolism; pyridoxal 5'-phosphate salvage; pyridoxamine 5'-phosphate from pyridoxamine: step 1/1. In terms of biological role, B6-vitamer kinase involved in the salvage pathway of pyridoxal 5'-phosphate (PLP). Catalyzes the phosphorylation of pyridoxine (PN), pyridoxal (PL), and pyridoxamine (PM), forming their respective 5'-phosphorylated esters, i.e. PNP, PLP and PMP. This is Pyridoxine/pyridoxal/pyridoxamine kinase from Bordetella avium (strain 197N).